A 177-amino-acid chain; its full sequence is UPF0114 protein HPP12_0190 (177 aa).

A run of 4 helical transmembrane segments spans residues 15–35 (WLLAPLCIAMSLVLVVLGYAF), 54–74 (LVLSALGLVDLLFMAGLVLMV), 102–122 (FNALKLKVSLSIVAISAIFLL), and 145–165 (PIFWQVVINLVFVCSALLAAV).

Belongs to the UPF0114 family.

It is found in the cell membrane. The chain is UPF0114 protein HPP12_0190 from Helicobacter pylori (strain P12).